Consider the following 356-residue polypeptide: Glutamine synthetase cytosolic isozyme 1-1 (356 aa).

Residue Ser-2 is modified to N-acetylserine. Phosphoserine is present on residues Ser-2 and Ser-48. In terms of domain architecture, GS beta-grasp spans 19–99 (IIAEYIWVGG…VMCDAYTPAG (81 aa)). The tract at residues 36–62 (KARTLPGPVTDPSQLPKWNYDGSSTGQ) is disordered. Residues 106-356 (KRHAAAKVFS…IAETTILWNP (251 aa)) form the GS catalytic domain.

This sequence belongs to the glutamine synthetase family. In terms of assembly, homooctamer. Interacts with CRK3 and GRF3. Phosphorylated by CRK3. In terms of tissue distribution, expressed in root tips, root hairs and epidermis. Ubiquitously expressed with higher levels in siliques and roots.

The protein resides in the cytoplasm. The catalysed reaction is L-glutamate + NH4(+) + ATP = L-glutamine + ADP + phosphate + H(+). In terms of biological role, high-affinity glutamine synthetase which catalyzes the synthesis of glutamine from ammonium and glutamate. May contribute to the homeostatic control of glutamine synthesis in roots. The polypeptide is Glutamine synthetase cytosolic isozyme 1-1 (GLN1-1) (Arabidopsis thaliana (Mouse-ear cress)).